Reading from the N-terminus, the 400-residue chain is Involucrin (400 aa).

Disordered regions lie at residues 1-196 (MSQQ…HLKQ), 273-312 (KEEV…EQQL), and 333-381 (KRDE…KGEV). Low complexity-rich tracts occupy residues 78 to 159 (QQQQ…QQHQ), 169 to 186 (EQQQ…GQQE), and 279 to 292 (EQQQ…QQHQ). The span at 333-344 (KRDEQLGKKEEQ) shows a compositional bias: basic and acidic residues. Residues 346 to 358 (LEPSEQQEGLLEQ) show a composition bias toward low complexity.

This sequence belongs to the involucrin family. As to quaternary structure, directly or indirectly cross-linked to cornifelin (CNFN). Substrate of transglutaminase. Specific glutamines or lysines are cross-linked to keratins, desmoplakin and to inter involucrin molecules. In terms of tissue distribution, keratinocytes of epidermis and other stratified squamous epithelia.

Its subcellular location is the cytoplasm. Its function is as follows. Part of the insoluble cornified cell envelope (CE) of stratified squamous epithelia. The polypeptide is Involucrin (IVL) (Tupaia glis (Common tree shrew)).